The chain runs to 553 residues: CTP synthase (553 aa).

The interval 1–270 is amidoligase domain; that stretch reads MTKFVFVTGG…DRIICEELRI (270 aa). S13 contacts CTP. S13 is a UTP binding site. ATP is bound by residues 14–19 and D71; that span reads SLGKGI. Mg(2+)-binding residues include D71 and E144. CTP is bound by residues 151 to 153, 191 to 196, and K227; these read DIE and KTKPTQ. Residues 191–196 and K227 each bind UTP; that span reads KTKPTQ. The region spanning 295–547 is the Glutamine amidotransferase type-1 domain; that stretch reads TIGMVGKYVD…VEAALAHQQN (253 aa). An L-glutamine-binding site is contributed by G356. C383 (nucleophile; for glutamine hydrolysis) is an active-site residue. L-glutamine contacts are provided by residues 384–387, E407, and R473; that span reads LGMQ. Catalysis depends on residues H520 and E522.

Belongs to the CTP synthase family. Homotetramer.

The enzyme catalyses UTP + L-glutamine + ATP + H2O = CTP + L-glutamate + ADP + phosphate + 2 H(+). It catalyses the reaction L-glutamine + H2O = L-glutamate + NH4(+). The catalysed reaction is UTP + NH4(+) + ATP = CTP + ADP + phosphate + 2 H(+). Its pathway is pyrimidine metabolism; CTP biosynthesis via de novo pathway; CTP from UDP: step 2/2. Allosterically activated by GTP, when glutamine is the substrate; GTP has no effect on the reaction when ammonia is the substrate. The allosteric effector GTP functions by stabilizing the protein conformation that binds the tetrahedral intermediate(s) formed during glutamine hydrolysis. Inhibited by the product CTP, via allosteric rather than competitive inhibition. In terms of biological role, catalyzes the ATP-dependent amination of UTP to CTP with either L-glutamine or ammonia as the source of nitrogen. Regulates intracellular CTP levels through interactions with the four ribonucleotide triphosphates. In Ralstonia pickettii (strain 12J), this protein is CTP synthase.